Consider the following 502-residue polypeptide: Lysine--tRNA ligase (502 aa).

2 residues coordinate Mg(2+): Glu403 and Glu410.

The protein belongs to the class-II aminoacyl-tRNA synthetase family. As to quaternary structure, homodimer. It depends on Mg(2+) as a cofactor.

Its subcellular location is the cytoplasm. It carries out the reaction tRNA(Lys) + L-lysine + ATP = L-lysyl-tRNA(Lys) + AMP + diphosphate. This Parasynechococcus marenigrum (strain WH8102) protein is Lysine--tRNA ligase.